The sequence spans 313 residues: Protein FixB (313 aa).

255–283 (LYLAVGISGQIQHMVGANASQTIFAINKD) contributes to the FAD binding site.

Belongs to the ETF alpha-subunit/FixB family. As to quaternary structure, heterodimer of FixA and FixB.

Its pathway is amine and polyamine metabolism; carnitine metabolism. Required for anaerobic carnitine reduction. May bring reductant to CaiA. This Shigella dysenteriae serotype 1 (strain Sd197) protein is Protein FixB.